The sequence spans 296 residues: Methylsterol monooxygenase 1 (296 aa).

2 helical membrane passes run 55–75 (LLVH…FQFI) and 100–120 (TLIF…YYFT). The region spanning 145-274 (CAVIEDAWHY…FTWWDRIFGT (130 aa)) is the Fatty acid hydroxylase domain. The Histidine box-1 signature appears at 157–161 (HRLLH). Residues 170-174 (HKVHH) carry the Histidine box-2 motif. The chain crosses the membrane as a helical span at residues 199-219 (FFIGIVVFCNHVVLLWAWVIC). Residues 249 to 255 (FHDFHHM) carry the Histidine box-3 motif.

Belongs to the sterol desaturase family. Requires Fe cation as cofactor.

It is found in the endoplasmic reticulum membrane. The enzyme catalyses 4,4-dimethyl-5alpha-cholest-7-en-3beta-ol + 6 Fe(II)-[cytochrome b5] + 3 O2 + 5 H(+) = 4alpha-carboxy-4beta-methyl-5alpha-cholest-7-ene-3beta-ol + 6 Fe(III)-[cytochrome b5] + 4 H2O. It functions in the pathway steroid biosynthesis; zymosterol biosynthesis; zymosterol from lanosterol: step 3/6. Its function is as follows. Catalyzes the first step in the removal of the two C-4 methyl groups of 4,4-dimethylzymosterol. This chain is Methylsterol monooxygenase 1 (MSMO1), found in Gallus gallus (Chicken).